Here is a 409-residue protein sequence, read N- to C-terminus: Tryptophan synthase beta chain (409 aa).

Lys104 bears the N6-(pyridoxal phosphate)lysine mark.

This sequence belongs to the TrpB family. Tetramer of two alpha and two beta chains. Requires pyridoxal 5'-phosphate as cofactor.

The enzyme catalyses (1S,2R)-1-C-(indol-3-yl)glycerol 3-phosphate + L-serine = D-glyceraldehyde 3-phosphate + L-tryptophan + H2O. The protein operates within amino-acid biosynthesis; L-tryptophan biosynthesis; L-tryptophan from chorismate: step 5/5. Functionally, the beta subunit is responsible for the synthesis of L-tryptophan from indole and L-serine. The protein is Tryptophan synthase beta chain of Trichodesmium erythraeum (strain IMS101).